Consider the following 135-residue polypeptide: Transcription antitermination protein NusB (135 aa).

Belongs to the NusB family.

Its function is as follows. Involved in transcription antitermination. Required for transcription of ribosomal RNA (rRNA) genes. Binds specifically to the boxA antiterminator sequence of the ribosomal RNA (rrn) operons. The sequence is that of Transcription antitermination protein NusB from Wolinella succinogenes (strain ATCC 29543 / DSM 1740 / CCUG 13145 / JCM 31913 / LMG 7466 / NCTC 11488 / FDC 602W) (Vibrio succinogenes).